Reading from the N-terminus, the 103-residue chain is Large ribosomal subunit protein uL24 (103 aa).

The protein belongs to the universal ribosomal protein uL24 family. In terms of assembly, part of the 50S ribosomal subunit.

Functionally, one of two assembly initiator proteins, it binds directly to the 5'-end of the 23S rRNA, where it nucleates assembly of the 50S subunit. In terms of biological role, one of the proteins that surrounds the polypeptide exit tunnel on the outside of the subunit. This chain is Large ribosomal subunit protein uL24, found in Oceanobacillus iheyensis (strain DSM 14371 / CIP 107618 / JCM 11309 / KCTC 3954 / HTE831).